Here is a 414-residue protein sequence, read N- to C-terminus: Succinylornithine transaminase (414 aa).

K260 carries the post-translational modification N6-(pyridoxal phosphate)lysine.

Belongs to the class-III pyridoxal-phosphate-dependent aminotransferase family. AstC subfamily. Requires pyridoxal 5'-phosphate as cofactor.

It carries out the reaction N(2)-succinyl-L-ornithine + 2-oxoglutarate = N-succinyl-L-glutamate 5-semialdehyde + L-glutamate. Its pathway is amino-acid degradation; L-arginine degradation via AST pathway; L-glutamate and succinate from L-arginine: step 3/5. Catalyzes the transamination of N(2)-succinylornithine and alpha-ketoglutarate into N(2)-succinylglutamate semialdehyde and glutamate. Can also act as an acetylornithine aminotransferase. The protein is Succinylornithine transaminase of Yersinia pseudotuberculosis serotype I (strain IP32953).